Consider the following 602-residue polypeptide: Zinc finger protein 652-B (602 aa).

Residues 60-232 are disordered; it reads FQDSKPTNEV…PSDKAKSEEK (173 aa). A compositionally biased stretch (basic and acidic residues) spans 65-79; the sequence is PTNEVHAVKGERENS. 2 stretches are compositionally biased toward acidic residues: residues 80-108 and 148-167; these read GESE…DEDE and DDEG…DEEN. Basic and acidic residues predominate over residues 222-232; sequence SPSDKAKSEEK. The C2H2-type 1 zinc-finger motif lies at 235-258; it reads LTCDKCPRVFNTRWYLEKHMNVTH. Residues 262–284 form a C2H2-type 2; degenerate zinc finger; sequence QICDKCGKKFVLESELSLHLQTD. C2H2-type zinc fingers lie at residues 289 to 312, 319 to 341, 347 to 369, 375 to 397, 403 to 425, and 431 to 453; these read IQCI…KIVH, FSCE…LVAH, FTCE…SLQH, FRCE…MSIH, FMCQ…MKTH, and FICE…RRTH. The C2H2-type 9; degenerate zinc-finger motif lies at 459–482; sequence YPCDVCGMRFRFSNMLKAHKEKCF. Positions 543–575 are disordered; sequence PFSHLHLHPHSHTHHLAVPPVPHLPPPPALFKS. The span at 545-557 shows a compositional bias: basic residues; it reads SHLHLHPHSHTHH. Over residues 561–571 the composition is skewed to pro residues; it reads PPVPHLPPPPA.

The protein belongs to the krueppel C2H2-type zinc-finger protein family.

It is found in the nucleus. May be involved in transcriptional regulation. The sequence is that of Zinc finger protein 652-B (znf652-b) from Xenopus laevis (African clawed frog).